The primary structure comprises 379 residues: Tetraacyldisaccharide 4'-kinase (379 aa).

63–70 (AVGGAGKT) serves as a coordination point for ATP.

This sequence belongs to the LpxK family.

The enzyme catalyses a lipid A disaccharide + ATP = a lipid IVA + ADP + H(+). The protein operates within glycolipid biosynthesis; lipid IV(A) biosynthesis; lipid IV(A) from (3R)-3-hydroxytetradecanoyl-[acyl-carrier-protein] and UDP-N-acetyl-alpha-D-glucosamine: step 6/6. In terms of biological role, transfers the gamma-phosphate of ATP to the 4'-position of a tetraacyldisaccharide 1-phosphate intermediate (termed DS-1-P) to form tetraacyldisaccharide 1,4'-bis-phosphate (lipid IVA). This Anaeromyxobacter dehalogenans (strain 2CP-1 / ATCC BAA-258) protein is Tetraacyldisaccharide 4'-kinase.